Here is a 455-residue protein sequence, read N- to C-terminus: Ribulose bisphosphate carboxylase large chain (455 aa).

At lysine 5 the chain carries N6,N6,N6-trimethyllysine. Residues asparagine 114 and threonine 164 each coordinate substrate. Residue lysine 166 is the Proton acceptor of the active site. Lysine 168 serves as a coordination point for substrate. Lysine 192, aspartate 194, and glutamate 195 together coordinate Mg(2+). The residue at position 192 (lysine 192) is an N6-carboxylysine. The active-site Proton acceptor is the histidine 285. Residues arginine 286, histidine 318, and serine 370 each contribute to the substrate site.

The protein belongs to the RuBisCO large chain family. Type I subfamily. As to quaternary structure, heterohexadecamer of 8 large chains and 8 small chains; disulfide-linked. The disulfide link is formed within the large subunit homodimers. Mg(2+) is required as a cofactor. The disulfide bond which can form in the large chain dimeric partners within the hexadecamer appears to be associated with oxidative stress and protein turnover.

It localises to the plastid. The protein localises to the chloroplast. The enzyme catalyses 2 (2R)-3-phosphoglycerate + 2 H(+) = D-ribulose 1,5-bisphosphate + CO2 + H2O. It carries out the reaction D-ribulose 1,5-bisphosphate + O2 = 2-phosphoglycolate + (2R)-3-phosphoglycerate + 2 H(+). RuBisCO catalyzes two reactions: the carboxylation of D-ribulose 1,5-bisphosphate, the primary event in carbon dioxide fixation, as well as the oxidative fragmentation of the pentose substrate in the photorespiration process. Both reactions occur simultaneously and in competition at the same active site. The protein is Ribulose bisphosphate carboxylase large chain of Lupinus cosentinii (West Australian blue lupine).